Here is a 392-residue protein sequence, read N- to C-terminus: Formate-dependent phosphoribosylglycinamide formyltransferase (392 aa).

N(1)-(5-phospho-beta-D-ribosyl)glycinamide is bound by residues 22-23 (EL) and Glu82. Residues Arg114, Lys155, 160-165 (SSGKGQ), 195-198 (EGVV), and Glu203 each bind ATP. Residues 119-308 (RLAAEELQLP…EFALHVRAFL (190 aa)) form the ATP-grasp domain. The Mg(2+) site is built by Glu267 and Glu279. Residues Asp286, Lys355, and 362–363 (RR) each bind N(1)-(5-phospho-beta-D-ribosyl)glycinamide.

The protein belongs to the PurK/PurT family. As to quaternary structure, homodimer.

It carries out the reaction N(1)-(5-phospho-beta-D-ribosyl)glycinamide + formate + ATP = N(2)-formyl-N(1)-(5-phospho-beta-D-ribosyl)glycinamide + ADP + phosphate + H(+). It participates in purine metabolism; IMP biosynthesis via de novo pathway; N(2)-formyl-N(1)-(5-phospho-D-ribosyl)glycinamide from N(1)-(5-phospho-D-ribosyl)glycinamide (formate route): step 1/1. In terms of biological role, involved in the de novo purine biosynthesis. Catalyzes the transfer of formate to 5-phospho-ribosyl-glycinamide (GAR), producing 5-phospho-ribosyl-N-formylglycinamide (FGAR). Formate is provided by PurU via hydrolysis of 10-formyl-tetrahydrofolate. The sequence is that of Formate-dependent phosphoribosylglycinamide formyltransferase from Shigella sonnei (strain Ss046).